The sequence spans 429 residues: Glutamate-1-semialdehyde 2,1-aminomutase (429 aa).

N6-(pyridoxal phosphate)lysine is present on lysine 268.

Belongs to the class-III pyridoxal-phosphate-dependent aminotransferase family. HemL subfamily. Homodimer. The cofactor is pyridoxal 5'-phosphate.

The protein resides in the cytoplasm. It catalyses the reaction (S)-4-amino-5-oxopentanoate = 5-aminolevulinate. It functions in the pathway porphyrin-containing compound metabolism; protoporphyrin-IX biosynthesis; 5-aminolevulinate from L-glutamyl-tRNA(Glu): step 2/2. In Serratia proteamaculans (strain 568), this protein is Glutamate-1-semialdehyde 2,1-aminomutase.